The sequence spans 513 residues: 2-isopropylmalate synthase (513 aa).

The Pyruvate carboxyltransferase domain maps to 5–268; that stretch reads LIIFDTTLRD…DVGIDTTQIV (264 aa). 4 residues coordinate Mn(2+): Asp-14, His-202, His-204, and Asn-239. The interval 394 to 513 is regulatory domain; sequence RFISLSQRSE…KAVQKINPQI (120 aa).

Belongs to the alpha-IPM synthase/homocitrate synthase family. LeuA type 1 subfamily. As to quaternary structure, homodimer. It depends on Mn(2+) as a cofactor.

Its subcellular location is the cytoplasm. It catalyses the reaction 3-methyl-2-oxobutanoate + acetyl-CoA + H2O = (2S)-2-isopropylmalate + CoA + H(+). Its pathway is amino-acid biosynthesis; L-leucine biosynthesis; L-leucine from 3-methyl-2-oxobutanoate: step 1/4. In terms of biological role, catalyzes the condensation of the acetyl group of acetyl-CoA with 3-methyl-2-oxobutanoate (2-ketoisovalerate) to form 3-carboxy-3-hydroxy-4-methylpentanoate (2-isopropylmalate). The chain is 2-isopropylmalate synthase from Cupriavidus metallidurans (strain ATCC 43123 / DSM 2839 / NBRC 102507 / CH34) (Ralstonia metallidurans).